Consider the following 677-residue polypeptide: Protein hook (677 aa).

The 118-residue stretch at 6-123 (NEMYYSLLEW…RLLQLVLGCA (118 aa)) folds into the Calponin-homology (CH) domain. Coiled-coil stretches lie at residues 135–436 (EIMC…KCGH) and 478–588 (QTAL…AKEV).

Belongs to the hook family. Homodimer. Interacts with microtubules via its N-terminus.

The protein localises to the cytoplasm. Its subcellular location is the cytoskeleton. It is found in the endosome. It localises to the synapse. Involved in endocytic trafficking by stabilizing organelles of the endocytic pathway. Probably acts as a cytoskeletal linker protein required to tether endosome vesicles to the cytoskeleton. Involved in modulation of endocytosis at stages required for down-regulation of membrane proteins that control synapse size. Not involved in synaptic vesicle recycling. Required in R7 cells for boss endocytosis into multivesicular bodies (MVBs). Has a role in regulating adult longevity. The chain is Protein hook from Drosophila persimilis (Fruit fly).